A 183-amino-acid polypeptide reads, in one-letter code: Crossover junction endodeoxyribonuclease RuvC (183 aa).

Catalysis depends on residues D7, E66, and D138. Mg(2+) contacts are provided by D7, E66, and D138.

This sequence belongs to the RuvC family. Homodimer which binds Holliday junction (HJ) DNA. The HJ becomes 2-fold symmetrical on binding to RuvC with unstacked arms; it has a different conformation from HJ DNA in complex with RuvA. In the full resolvosome a probable DNA-RuvA(4)-RuvB(12)-RuvC(2) complex forms which resolves the HJ. Mg(2+) serves as cofactor.

It is found in the cytoplasm. It carries out the reaction Endonucleolytic cleavage at a junction such as a reciprocal single-stranded crossover between two homologous DNA duplexes (Holliday junction).. Functionally, the RuvA-RuvB-RuvC complex processes Holliday junction (HJ) DNA during genetic recombination and DNA repair. Endonuclease that resolves HJ intermediates. Cleaves cruciform DNA by making single-stranded nicks across the HJ at symmetrical positions within the homologous arms, yielding a 5'-phosphate and a 3'-hydroxyl group; requires a central core of homology in the junction. The consensus cleavage sequence is 5'-(A/T)TT(C/G)-3'. Cleavage occurs on the 3'-side of the TT dinucleotide at the point of strand exchange. HJ branch migration catalyzed by RuvA-RuvB allows RuvC to scan DNA until it finds its consensus sequence, where it cleaves and resolves the cruciform DNA. The polypeptide is Crossover junction endodeoxyribonuclease RuvC (Burkholderia ambifaria (strain ATCC BAA-244 / DSM 16087 / CCUG 44356 / LMG 19182 / AMMD) (Burkholderia cepacia (strain AMMD))).